The following is a 321-amino-acid chain: MATH domain and coiled-coil domain-containing protein At3g58260 (321 aa).

The 130-residue stretch at asparagine 6–valine 135 folds into the MATH domain. Residues lysine 232–glycine 283 are a coiled coil.

The chain is MATH domain and coiled-coil domain-containing protein At3g58260 from Arabidopsis thaliana (Mouse-ear cress).